Reading from the N-terminus, the 587-residue chain is Cryptochrome-1 (587 aa).

Positions 3–132 (VNAVHWFRKG…EVIVRISHTL (130 aa)) constitute a Photolyase/cryptochrome alpha/beta domain. K11 is covalently cross-linked (Glycyl lysine isopeptide (Lys-Gly) (interchain with G-Cter in ubiquitin)). The short motif at 50–54 (NRWRF) is the LIR 1 element. A Phosphoserine; by AMPK modification is found at S71. Positions 82–87 (DVFPRL) match the LIR 2 motif. Residue K107 forms a Glycyl lysine isopeptide (Lys-Gly) (interchain with G-Cter in ubiquitin) linkage. Residues 151 to 156 (KRFQTL) carry the LIR 3 motif. Residue K159 forms a Glycyl lysine isopeptide (Lys-Gly) (interchain with G-Cter in ubiquitin) linkage. Residue S247 is modified to Phosphoserine; by MAPK. S252 lines the FAD pocket. 2 consecutive short sequence motifs (LIR) follow at residues 255 to 260 (LRFGCL) and 271 to 276 (DLYKKV). S280 is modified (phosphoserine; by AMPK). The LIR 6 motif lies at 285–290 (SLYGQL). Q289 is an FAD binding site. Residue K329 forms a Glycyl lysine isopeptide (Lys-Gly) (interchain with G-Cter in ubiquitin) linkage. The LIR 7 signature appears at 335-339 (TGFPW). H355 contacts FAD. Residues 371-470 (WISWEEGMKV…LIGVNYPKPM (100 aa)) form a required for inhibition of CLOCK-BMAL1-mediated transcription region. An LIR 8 motif is present at residues 379–384 (KVFEEL). 387–389 (DAD) serves as a coordination point for FAD. 3 short sequence motifs (LIR) span residues 395 to 400 (GSWMWL), 411 to 416 (HCYCPV), and 430 to 435 (RRYLPV). The interaction with TIMELESS stretch occupies residues 471-493 (VNHAEASRLNIERMKQIYQQLSR). K485 is covalently cross-linked (Glycyl lysine isopeptide (Lys-Gly) (interchain with G-Cter in ubiquitin)). 2 short sequence motifs (LIR) span residues 486–491 (QIYQQL) and 492–497 (SRYRGL). The tract at residues 554-587 (GSSSMGHGLSNGKRPSQEEDTQSIGPKVQRQSTN) is disordered. S569 carries the post-translational modification Phosphoserine.

The protein belongs to the DNA photolyase class-1 family. Component of the circadian core oscillator, which includes the CRY proteins, CLOCK or NPAS2, BMAL1 or BMAL2, CSNK1D and/or CSNK1E, TIMELESS, and the PER proteins. Interacts directly with TIMELESS. Interacts directly with PER1, PER2 and PER3; interaction with PER2 inhibits its ubiquitination and vice versa. Interacts with FBXL21. Interacts with FBXL3. Interacts with CLOCK-BMAL1 independently of PER2 and DNA. Interacts with HDAC1, HDAC2 and SIN3B. Interacts with nuclear receptors AR, NR1D1, NR3C1/GR, RORA and RORC; the interaction with at least NR3C1/GR is ligand dependent. Interacts with PRKDC. Interacts with the G protein subunit alpha GNAS; the interaction may block GPCR-mediated regulation of cAMP concentrations. Interacts with PRMT5. Interacts with EZH2. Interacts with MYBBP1A, DOCK7, HNRNPU, RPL7A, RPL8 and RPS3. Interacts with PPP5C (via TPR repeats). Interacts with MAP1LC3B. Interacts with CLOCK. Interacts with BMAL1. Interacts weakly with HDAC3; this interaction is enhanced in the presence of FBXL3. Interacts with TRIM28, KCTD5 and DDB1 Interacts with HNF4A. Interacts with PSMD2 in a KDM8-dependent manner. Interacts with KDM8 in a FBXL3-dependent manner. Interacts with PPARG in a ligand-dependent manner. Interacts with PPARD (via domain NR LBD) and NR1I2 (via domain NR LBD) in a ligand-dependent manner. Interacts with PPARA, NR1I3 and VDR. FAD serves as cofactor. Requires (6R)-5,10-methylene-5,6,7,8-tetrahydrofolate as cofactor. Post-translationally, phosphorylation on Ser-247 by MAPK is important for the inhibition of CLOCK-BMAL1-mediated transcriptional activity. Phosphorylation by CSNK1E requires interaction with PER1 or PER2. Phosphorylation at Ser-71 and Ser-280 by AMPK decreases protein stability. Phosphorylation at Ser-569 exhibits a robust circadian rhythm with a peak at CT8, increases protein stability, prevents SCF(FBXL3)-mediated degradation and is antagonized by interaction with PRKDC. Ubiquitinated by the SCF(FBXL3) and SCF(FBXL21) complexes, regulating the balance between degradation and stabilization. The SCF(FBXL3) complex is mainly nuclear and mediates ubiquitination and subsequent degradation of CRY1. In contrast, cytoplasmic SCF(FBXL21) complex-mediated ubiquitination leads to stabilize CRY1 and counteract the activity of the SCF(FBXL3) complex. The SCF(FBXL3) and SCF(FBXL21) complexes probably mediate ubiquitination at different Lys residues. Ubiquitination at Lys-11 and Lys-107 are specifically ubiquitinated by the SCF(FBXL21) complex but not by the SCF(FBXL3) complex. Ubiquitination may be inhibited by PER2. Deubiquitinated by USP7. In terms of processing, undergoes autophagy-mediated degradation in the liver in a time-dependent manner. Autophagic degradation of CRY1 (an inhibitor of gluconeogenesis) occurs during periods of reduced feeding allowing induction of gluconeogenesis and maintenance of blood glucose levels. In terms of tissue distribution, expressed in all tissues tested including spleen, liver, skeletal muscle, kidney, brain, intestine, eye, harderian gland, liver and heart. Highest levels in the eye, brain, kidney and harderian gland. In the brain, especially located to the suprachiasma nucleus (SCN).

It is found in the cytoplasm. It localises to the nucleus. In terms of biological role, transcriptional repressor which forms a core component of the circadian clock. The circadian clock, an internal time-keeping system, regulates various physiological processes through the generation of approximately 24 hour circadian rhythms in gene expression, which are translated into rhythms in metabolism and behavior. It is derived from the Latin roots 'circa' (about) and 'diem' (day) and acts as an important regulator of a wide array of physiological functions including metabolism, sleep, body temperature, blood pressure, endocrine, immune, cardiovascular, and renal function. Consists of two major components: the central clock, residing in the suprachiasmatic nucleus (SCN) of the brain, and the peripheral clocks that are present in nearly every tissue and organ system. Both the central and peripheral clocks can be reset by environmental cues, also known as Zeitgebers (German for 'timegivers'). The predominant Zeitgeber for the central clock is light, which is sensed by retina and signals directly to the SCN. The central clock entrains the peripheral clocks through neuronal and hormonal signals, body temperature and feeding-related cues, aligning all clocks with the external light/dark cycle. Circadian rhythms allow an organism to achieve temporal homeostasis with its environment at the molecular level by regulating gene expression to create a peak of protein expression once every 24 hours to control when a particular physiological process is most active with respect to the solar day. Transcription and translation of core clock components (CLOCK, NPAS2, BMAL1, BMAL2, PER1, PER2, PER3, CRY1 and CRY2) plays a critical role in rhythm generation, whereas delays imposed by post-translational modifications (PTMs) are important for determining the period (tau) of the rhythms (tau refers to the period of a rhythm and is the length, in time, of one complete cycle). A diurnal rhythm is synchronized with the day/night cycle, while the ultradian and infradian rhythms have a period shorter and longer than 24 hours, respectively. Disruptions in the circadian rhythms contribute to the pathology of cardiovascular diseases, cancer, metabolic syndromes and aging. A transcription/translation feedback loop (TTFL) forms the core of the molecular circadian clock mechanism. Transcription factors, CLOCK or NPAS2 and BMAL1 or BMAL2, form the positive limb of the feedback loop, act in the form of a heterodimer and activate the transcription of core clock genes and clock-controlled genes (involved in key metabolic processes), harboring E-box elements (5'-CACGTG-3') within their promoters. The core clock genes: PER1/2/3 and CRY1/2 which are transcriptional repressors form the negative limb of the feedback loop and interact with the CLOCK|NPAS2-BMAL1|BMAL2 heterodimer inhibiting its activity and thereby negatively regulating their own expression. This heterodimer also activates nuclear receptors NR1D1/2 and RORA/B/G, which form a second feedback loop and which activate and repress BMAL1 transcription, respectively. CRY1 and CRY2 have redundant functions but also differential and selective contributions at least in defining the pace of the SCN circadian clock and its circadian transcriptional outputs. More potent transcriptional repressor in cerebellum and liver than CRY2, though more effective in lengthening the period of the SCN oscillator. On its side, CRY2 seems to play a critical role in tuning SCN circadian period by opposing the action of CRY1. With CRY2, is dispensable for circadian rhythm generation but necessary for the development of intercellular networks for rhythm synchrony. Capable of translocating circadian clock core proteins such as PER proteins to the nucleus. Interacts with CLOCK-BMAL1 independently of PER proteins and is found at CLOCK-BMAL1-bound sites, suggesting that CRY may act as a molecular gatekeeper to maintain CLOCK-BMAL1 in a poised and repressed state until the proper time for transcriptional activation. Represses the CLOCK-BMAL1 induced transcription of BHLHE40/DEC1, ATF4, MTA1, KLF10 and NAMPT. May repress circadian target genes expression in collaboration with HDAC1 and HDAC2 through histone deacetylation. Mediates the clock-control activation of ATR and modulates ATR-mediated DNA damage checkpoint. In liver, mediates circadian regulation of cAMP signaling and gluconeogenesis by binding to membrane-coupled G proteins and blocking glucagon-mediated increases in intracellular cAMP concentrations and CREB1 phosphorylation. Inhibits hepatic gluconeogenesis by decreasing nuclear FOXO1 levels that down-regulates gluconeogenic gene expression. Besides its role in the maintenance of the circadian clock, is also involved in the regulation of other processes. Represses glucocorticoid receptor NR3C1/GR-induced transcriptional activity by binding to glucocorticoid response elements (GREs). Plays a key role in glucose and lipid metabolism modulation, in part, through the transcriptional regulation of genes involved in these pathways, such as LEP or ACSL4. Represses PPARD and its target genes in the skeletal muscle and limits exercise capacity. Plays an essential role in the generation of circadian rhythms in the retina. Represses the transcriptional activity of NR1I2. The protein is Cryptochrome-1 (CRY1) of Spalax judaei (Judean Mountains blind mole rat).